The sequence spans 270 residues: Glutamate racemase (270 aa).

Residues 14 to 15 and 46 to 47 each bind substrate; these read DS and YG. The active-site Proton donor/acceptor is cysteine 77. Residue 78 to 79 coordinates substrate; that stretch reads NT. Cysteine 186 acts as the Proton donor/acceptor in catalysis. Position 187-188 (187-188) interacts with substrate; it reads TH.

It belongs to the aspartate/glutamate racemases family.

The enzyme catalyses L-glutamate = D-glutamate. The protein operates within cell wall biogenesis; peptidoglycan biosynthesis. Its function is as follows. Provides the (R)-glutamate required for cell wall biosynthesis. In Trichodesmium erythraeum (strain IMS101), this protein is Glutamate racemase.